We begin with the raw amino-acid sequence, 487 residues long: MKALDELTFDNRFARLGDAFSTHVLPEPLDAPRLVVASPAAMALLDLDPSVAETPVFAELFGGHKLWAEAEPRAMVYSGHQFGGYTPQLGDGRGLLLGEVYNEAGEHWDLHLKGAGMTPYSRMGDGRAVLRSSIREFLASEALHALGIPSSRALCVIGSDTPVWREKQERGAMVLRMAHSHIRFGHFEYFYYTKKPEQQAELAEHVLNLHYPECREQPEPYLAMFREIVERNAELIAKWQAYGFCHGVMNTDNMSILGITFDFGPFAFLDDFDAHFICNHSDHEGRYSFSNQVPIGQWNLSALAQALTPFIGVDALKEALGLYLPLYQANYLDLMRRRLGLTTAEDDDQKLVERLLKLMQSSGVDYTLFFRRLGDEPAALAVTRLRDDFVDLAGFDAWAEQYKARVERDGDNSEEQRRARMHAVNPLYILRNYLAQNAIAAAESGDYSEVRRLHEVLSKPFEEQAGMEQYAQRPPDWGKHLEISCSS.

Residues glycine 90, glycine 92, arginine 93, lysine 113, aspartate 125, glycine 126, arginine 176, and arginine 183 each contribute to the ATP site. The Proton acceptor role is filled by aspartate 252. Asparagine 253 and aspartate 262 together coordinate Mg(2+). An ATP-binding site is contributed by aspartate 262.

This sequence belongs to the SELO family. It depends on Mg(2+) as a cofactor. Mn(2+) serves as cofactor.

The enzyme catalyses L-seryl-[protein] + ATP = 3-O-(5'-adenylyl)-L-seryl-[protein] + diphosphate. It catalyses the reaction L-threonyl-[protein] + ATP = 3-O-(5'-adenylyl)-L-threonyl-[protein] + diphosphate. It carries out the reaction L-tyrosyl-[protein] + ATP = O-(5'-adenylyl)-L-tyrosyl-[protein] + diphosphate. The catalysed reaction is L-histidyl-[protein] + UTP = N(tele)-(5'-uridylyl)-L-histidyl-[protein] + diphosphate. The enzyme catalyses L-seryl-[protein] + UTP = O-(5'-uridylyl)-L-seryl-[protein] + diphosphate. It catalyses the reaction L-tyrosyl-[protein] + UTP = O-(5'-uridylyl)-L-tyrosyl-[protein] + diphosphate. In terms of biological role, nucleotidyltransferase involved in the post-translational modification of proteins. It can catalyze the addition of adenosine monophosphate (AMP) or uridine monophosphate (UMP) to a protein, resulting in modifications known as AMPylation and UMPylation. The protein is Protein nucleotidyltransferase YdiU of Pseudomonas fluorescens (strain SBW25).